The chain runs to 345 residues: D-alanine--D-alanine ligase (345 aa).

The 208-residue stretch at 133–340 folds into the ATP-grasp domain; the sequence is KLYAKERGVK…IDYRYIHQIQ (208 aa). Position 162–211 (162–211) interacts with ATP; the sequence is PLIVKPLRLGSSIGVSIAKNRQELDYALDVAFEFDEAALLEPFMQGIKEY. Residues Asp-284, Glu-296, and Asn-298 each contribute to the Mg(2+) site.

Belongs to the D-alanine--D-alanine ligase family. Mg(2+) is required as a cofactor. Mn(2+) serves as cofactor.

The protein resides in the cytoplasm. The enzyme catalyses 2 D-alanine + ATP = D-alanyl-D-alanine + ADP + phosphate + H(+). It functions in the pathway cell wall biogenesis; peptidoglycan biosynthesis. Cell wall formation. This Wolinella succinogenes (strain ATCC 29543 / DSM 1740 / CCUG 13145 / JCM 31913 / LMG 7466 / NCTC 11488 / FDC 602W) (Vibrio succinogenes) protein is D-alanine--D-alanine ligase.